A 303-amino-acid chain; its full sequence is tRNA pseudouridine synthase B (303 aa).

Residue aspartate 53 is the Nucleophile of the active site.

It belongs to the pseudouridine synthase TruB family. Type 1 subfamily.

It catalyses the reaction uridine(55) in tRNA = pseudouridine(55) in tRNA. Functionally, responsible for synthesis of pseudouridine from uracil-55 in the psi GC loop of transfer RNAs. The sequence is that of tRNA pseudouridine synthase B from Zymomonas mobilis subsp. mobilis (strain ATCC 31821 / ZM4 / CP4).